The following is a 386-amino-acid chain: MFPRVSAVLPFRPLSRLPLCSAGPEASAATVVPLASPHGTVRTKCNIQRYFGTNSVIYSKKDDKSVPACEISKETENQGSTKENKKKDLVNIIKGMKVELSTVNVQTTKPPNRGQLKSLEAAIRRLQKSPEDAPQKSKSLSPELVAAATAVADSLPFDKQTTKSELLRQLRQHEEDSKAQKDGEKPKISFSNIISDMKVARSSTARASTRPVHQIQFDEGADDFVDREETADLRKRFRKNIFKGKRLNIFELKPVTEEAPETEAAPSLWDVEFAKQLAAVTEQPFQNGFEEMIQWTKEGKLWEFPINNEAGFDDDGSEFHEHIFLDKYLEGFPKQGPIRHFMELVTCGLSKNPYLSVKQKVEHIEWFRNYFNEKQDILKESGINFS.

It belongs to the mitochondrion-specific ribosomal protein mS31 family. In terms of assembly, component of the mitochondrial ribosome small subunit (28S) which comprises a 12S rRNA and about 30 distinct proteins.

Its subcellular location is the mitochondrion. This Bos taurus (Bovine) protein is Small ribosomal subunit protein mS31 (MRPS31).